The chain runs to 356 residues: UDP-3-O-acylglucosamine N-acyltransferase (356 aa).

Catalysis depends on His242, which acts as the Proton acceptor.

This sequence belongs to the transferase hexapeptide repeat family. LpxD subfamily. In terms of assembly, homotrimer.

The catalysed reaction is a UDP-3-O-[(3R)-3-hydroxyacyl]-alpha-D-glucosamine + a (3R)-hydroxyacyl-[ACP] = a UDP-2-N,3-O-bis[(3R)-3-hydroxyacyl]-alpha-D-glucosamine + holo-[ACP] + H(+). It participates in bacterial outer membrane biogenesis; LPS lipid A biosynthesis. Functionally, catalyzes the N-acylation of UDP-3-O-acylglucosamine using 3-hydroxyacyl-ACP as the acyl donor. Is involved in the biosynthesis of lipid A, a phosphorylated glycolipid that anchors the lipopolysaccharide to the outer membrane of the cell. The sequence is that of UDP-3-O-acylglucosamine N-acyltransferase from Acinetobacter baumannii (strain ACICU).